A 164-amino-acid chain; its full sequence is Photosystem II extrinsic protein V (164 aa).

A signal peptide spans 1–27 (MALKSKFLVGSILATFILNGFSSPAQA). Residues C64, C67, H68, and H119 each coordinate heme c.

The protein belongs to the cytochrome c family. PsbV subfamily. As to quaternary structure, PSII is composed of 1 copy each of membrane proteins PsbA, PsbB, PsbC, PsbD, PsbE, PsbF, PsbH, PsbI, PsbJ, PsbK, PsbL, PsbM, PsbT, PsbY, PsbZ, Psb30/Ycf12, at least 3 peripheral proteins of the oxygen-evolving complex and a large number of cofactors. It forms dimeric complexes. Heme c is required as a cofactor.

It is found in the plastid. The protein localises to the chloroplast thylakoid membrane. In terms of biological role, one of the extrinsic, lumenal subunits of photosystem II (PSII). PSII is a light-driven water plastoquinone oxidoreductase, using light energy to abstract electrons from H(2)O, generating a proton gradient subsequently used for ATP formation. The extrinsic proteins stabilize the structure of photosystem II oxygen-evolving complex (OEC), the ion environment of oxygen evolution and protect the OEC against heat-induced inactivation. The sequence is that of Photosystem II extrinsic protein V from Emiliania huxleyi (Coccolithophore).